The sequence spans 179 residues: SCAN domain-containing protein 1 (179 aa).

The tract at residues 1 to 104 (MAATEPILAA…PGPAGSRLGP (104 aa)) is disordered. The span at 52–80 (SPNAAVPEAIPTPRAAASAALELPLGPAP) shows a compositional bias: low complexity. The region spanning 108 to 166 (RQRFRQFRYQDAAGPREAFRQLRELSRQWLRPDIRTKEQIVEMLVQEQLLAILPEAARA) is the SCAN box domain.

In terms of assembly, interacts with ZNF202.

The protein localises to the nucleus. In terms of biological role, may regulate transcriptional activity. The chain is SCAN domain-containing protein 1 (SCAND1) from Homo sapiens (Human).